Consider the following 513-residue polypeptide: Na(+)/H(+) antiporter NhaB (513 aa).

Transmembrane regions (helical) follow at residues 21 to 41, 43 to 63, 88 to 108, 137 to 157, 202 to 222, 235 to 255, 299 to 318, 322 to 344, 350 to 370, 389 to 409, and 477 to 497; these read LCII…SPFI, GWTL…CYPL, IIAN…IYFM, AAFL…ISVG, LLMH…VGEP, FIEF…CGIA, MAIQ…LHLA, IIGL…HAIG, PMPF…IVDL, LALF…VFVG, and MALP…EYLL.

This sequence belongs to the NhaB Na(+)/H(+) (TC 2.A.34) antiporter family.

It localises to the cell inner membrane. The enzyme catalyses 2 Na(+)(in) + 3 H(+)(out) = 2 Na(+)(out) + 3 H(+)(in). Na(+)/H(+) antiporter that extrudes sodium in exchange for external protons. This is Na(+)/H(+) antiporter NhaB from Haemophilus ducreyi (strain 35000HP / ATCC 700724).